The chain runs to 171 residues: Co-chaperone protein HscB (171 aa).

The region spanning 2–74 (DYFTLFGLPA…LTRAEYLLSL (73 aa)) is the J domain.

It belongs to the HscB family. Interacts with HscA and stimulates its ATPase activity. Interacts with IscU.

Co-chaperone involved in the maturation of iron-sulfur cluster-containing proteins. Seems to help targeting proteins to be folded toward HscA. In Salmonella heidelberg (strain SL476), this protein is Co-chaperone protein HscB.